A 199-amino-acid polypeptide reads, in one-letter code: Protein GrpE (199 aa).

Positions 1 to 24 are enriched in basic and acidic residues; sequence MSKQNKKDWKKFKDEHKEEHKVEN. Positions 1–52 are disordered; the sequence is MSKQNKKDWKKFKDEHKEEHKVENEILEEETDEESQHQEPALGHPSYTALEE.

Belongs to the GrpE family. Homodimer.

Its subcellular location is the cytoplasm. In terms of biological role, participates actively in the response to hyperosmotic and heat shock by preventing the aggregation of stress-denatured proteins, in association with DnaK and GrpE. It is the nucleotide exchange factor for DnaK and may function as a thermosensor. Unfolded proteins bind initially to DnaJ; upon interaction with the DnaJ-bound protein, DnaK hydrolyzes its bound ATP, resulting in the formation of a stable complex. GrpE releases ADP from DnaK; ATP binding to DnaK triggers the release of the substrate protein, thus completing the reaction cycle. Several rounds of ATP-dependent interactions between DnaJ, DnaK and GrpE are required for fully efficient folding. This is Protein GrpE from Legionella pneumophila.